The primary structure comprises 468 residues: Zinc finger protein mex-5 (468 aa).

Over residues 1–19 (MKAASNSVSSAGGSVSPTT) the composition is skewed to low complexity. A disordered region spans residues 1–32 (MKAASNSVSSAGGSVSPTTTQPPLPPGQSSHP). Thr-186 carries the post-translational modification Phosphothreonine; by mbk-2. A compositionally biased stretch (basic and acidic residues) spans 243–254 (NHFHEHRGEKFG). Residues 243-269 (NHFHEHRGEKFGRRGFPIPETDSQQPP) form a disordered region. 2 consecutive C3H1-type zinc fingers follow at residues 270–299 (NYKT…HGLK) and 314–344 (KYKT…HPTD). A disordered region spans residues 414–468 (DLQAGGDYNQPESNEDDLPPHLRRNRRENPPMNKRRTSLSTKWTSEENLGLRGHY). A compositionally biased stretch (polar residues) spans 451-460 (SLSTKWTSEE). Ser-458 carries the phosphoserine modification.

As to quaternary structure, interacts (when phosphorylated on Thr-186) with plk-1 (via POLO box domain) and plk-2 (via POLO box domain). Phosphorylation on Ser-458 by par-1 promotes localization of the protein to the anterior cytoplasm of the zygote. Phosphorylation by mbk-1 appears to be required for subsequent phosphorylation by plk-1. In terms of tissue distribution, asymmetrically localized to the anterior of the zygote before mitotic division, then differentially distributed to the somatic blastomere precursor cells.

Its subcellular location is the cytoplasm. Functionally, functions with mex-6 to affect embryonic viability, establish soma germline asymmetry in embryos and establish plk-1, pie-1, mex-1, and pos-1 asymmetry in embryos. Also affects formation of intestinal cells. Binds to mRNA in vitro, and inhibits pgl-3-mediated P-granule formation, probably by competing with pgl-3 for binding to mRNA. Required for neg-1 expression in anterior blastomeres during embryogenesis. The sequence is that of Zinc finger protein mex-5 from Caenorhabditis elegans.